A 106-amino-acid chain; its full sequence is Ig kappa chain C region, B allele (106 aa).

The region spanning 5–102 is the Ig-like domain; sequence PTVSIFPPST…SSSPVVKSFN (98 aa). The cysteines at positions 26 and 86 are disulfide-linked.

The protein is Ig kappa chain C region, B allele of Rattus norvegicus (Rat).